A 128-amino-acid chain; its full sequence is MSDAANDTKVRFDPERLTFNEAGLVPAIAQDAETSEVLMLAWMNAESIARTLRTGRVTYWSRSRQAFWVKGETSGHVQELVDLRIDCDRDCLLVLLRQTGPACHTGRRSCFYTGVRDGHEQELMTPQD.

Asp86 is a Mg(2+) binding site. Cys87 is a binding site for Zn(2+). Mg(2+) is bound by residues Asp88 and Asp90. Positions 103 and 110 each coordinate Zn(2+).

Belongs to the PRA-CH family. In terms of assembly, homodimer. Mg(2+) is required as a cofactor. It depends on Zn(2+) as a cofactor.

It localises to the cytoplasm. The catalysed reaction is 1-(5-phospho-beta-D-ribosyl)-5'-AMP + H2O = 1-(5-phospho-beta-D-ribosyl)-5-[(5-phospho-beta-D-ribosylamino)methylideneamino]imidazole-4-carboxamide. Its pathway is amino-acid biosynthesis; L-histidine biosynthesis; L-histidine from 5-phospho-alpha-D-ribose 1-diphosphate: step 3/9. Functionally, catalyzes the hydrolysis of the adenine ring of phosphoribosyl-AMP. The chain is Phosphoribosyl-AMP cyclohydrolase from Roseobacter denitrificans (strain ATCC 33942 / OCh 114) (Erythrobacter sp. (strain OCh 114)).